A 235-amino-acid chain; its full sequence is Uridylate kinase (235 aa).

Position 9 to 12 (9 to 12 (KISG)) interacts with ATP. A UMP-binding site is contributed by glycine 50. Positions 51 and 55 each coordinate ATP. UMP-binding positions include aspartate 70 and 131-138 (TGFPYFTT). Residues asparagine 159, tyrosine 165, and aspartate 168 each contribute to the ATP site.

Belongs to the UMP kinase family. In terms of assembly, homohexamer; trimer of dimers.

It localises to the cytoplasm. The catalysed reaction is UMP + ATP = UDP + ADP. Its pathway is pyrimidine metabolism; CTP biosynthesis via de novo pathway; UDP from UMP (UMPK route): step 1/1. Unlike other bacteria, is not activated by GTP. UTP is a competitive inhibitor against UMP and a non-competitive inhibitor toward ATP. Functionally, catalyzes the reversible phosphorylation of UMP to UDP, with ATP as the most efficient phosphate donor. Is also able to phosphorylate dUMP. The protein is Uridylate kinase (pyrH) of Ureaplasma parvum serovar 3 (strain ATCC 700970).